The primary structure comprises 447 residues: Argininosuccinate synthase (447 aa).

ATP-binding positions include 17–25 and alanine 43; that span reads AFSGGLDTS. Tyrosine 99 provides a ligand contact to L-citrulline. ATP-binding residues include glycine 129 and threonine 131. Threonine 131, asparagine 135, and aspartate 136 together coordinate L-aspartate. An L-citrulline-binding site is contributed by asparagine 135. Residue aspartate 136 coordinates ATP. Positions 139 and 192 each coordinate L-citrulline. An ATP-binding site is contributed by aspartate 194. 3 residues coordinate L-citrulline: threonine 201, glutamate 203, and glutamate 280.

The protein belongs to the argininosuccinate synthase family. Type 2 subfamily. In terms of assembly, homotetramer.

The protein localises to the cytoplasm. It carries out the reaction L-citrulline + L-aspartate + ATP = 2-(N(omega)-L-arginino)succinate + AMP + diphosphate + H(+). Its pathway is amino-acid biosynthesis; L-arginine biosynthesis; L-arginine from L-ornithine and carbamoyl phosphate: step 2/3. This chain is Argininosuccinate synthase, found in Salmonella paratyphi B (strain ATCC BAA-1250 / SPB7).